The sequence spans 177 residues: Large ribosomal subunit protein uL6 (177 aa).

The protein belongs to the universal ribosomal protein uL6 family. Part of the 50S ribosomal subunit.

This protein binds to the 23S rRNA, and is important in its secondary structure. It is located near the subunit interface in the base of the L7/L12 stalk, and near the tRNA binding site of the peptidyltransferase center. This chain is Large ribosomal subunit protein uL6, found in Bartonella quintana (strain Toulouse) (Rochalimaea quintana).